Consider the following 386-residue polypeptide: Zinc finger CCCH domain-containing protein 2 (386 aa).

2 C3H1-type zinc fingers span residues His-116–Phe-143 and Arg-151–Asp-175. Disordered stretches follow at residues Leu-180 to Asp-200 and Ser-220 to Ser-252. Residues Ala-182–Ser-192 show a composition bias toward polar residues. The span at Ser-220–Pro-229 shows a compositional bias: low complexity. The segment covering Pro-230–Ser-241 has biased composition (pro residues).

Its subcellular location is the nucleus. Its function is as follows. Involved in leaf senescence delay. May repress jasmonic acid (JA) signaling role in promoting leaf senescence. May regulate panicle development and pollination/fertilization process. This is Zinc finger CCCH domain-containing protein 2 from Oryza sativa subsp. japonica (Rice).